Consider the following 98-residue polypeptide: Large ribosomal subunit protein uL23 (98 aa).

This sequence belongs to the universal ribosomal protein uL23 family. In terms of assembly, part of the 50S ribosomal subunit. Contacts protein L29, and trigger factor when it is bound to the ribosome.

In terms of biological role, one of the early assembly proteins it binds 23S rRNA. One of the proteins that surrounds the polypeptide exit tunnel on the outside of the ribosome. Forms the main docking site for trigger factor binding to the ribosome. This Streptococcus sanguinis (strain SK36) protein is Large ribosomal subunit protein uL23.